We begin with the raw amino-acid sequence, 226 residues long: tRNA (guanine-N(7)-)-methyltransferase (226 aa).

The S-adenosyl-L-methionine site is built by Glu57, Glu82, Asp109, and Asp132. The active site involves Asp132. Residues Lys136, Asp168, and 205–208 (TKFE) contribute to the substrate site.

It belongs to the class I-like SAM-binding methyltransferase superfamily. TrmB family.

The catalysed reaction is guanosine(46) in tRNA + S-adenosyl-L-methionine = N(7)-methylguanosine(46) in tRNA + S-adenosyl-L-homocysteine. The protein operates within tRNA modification; N(7)-methylguanine-tRNA biosynthesis. Functionally, catalyzes the formation of N(7)-methylguanine at position 46 (m7G46) in tRNA. This Legionella pneumophila subsp. pneumophila (strain Philadelphia 1 / ATCC 33152 / DSM 7513) protein is tRNA (guanine-N(7)-)-methyltransferase.